The primary structure comprises 70 residues: Large ribosomal subunit protein bL31 (70 aa).

Zn(2+) contacts are provided by Cys-16, Cys-18, Cys-37, and Cys-40.

Belongs to the bacterial ribosomal protein bL31 family. Type A subfamily. As to quaternary structure, part of the 50S ribosomal subunit. Requires Zn(2+) as cofactor.

Binds the 23S rRNA. In Shewanella sp. (strain MR-4), this protein is Large ribosomal subunit protein bL31.